The primary structure comprises 79 residues: Calcium/calmodulin-dependent protein kinase II inhibitor 2 (79 aa).

The inhibitory domain stretch occupies residues 43–69 (KRPPKLGQIGRAKRVVIEDDRIDEVLK).

It belongs to the CAMK2N family.

The protein resides in the nucleus. The protein localises to the cytoplasm. It is found in the cytosol. Potent and specific cellular inhibitor of CaM-kinase II (CAMK2). Traps Ca(2+)/calmodulin on CAMK2. This Xenopus laevis (African clawed frog) protein is Calcium/calmodulin-dependent protein kinase II inhibitor 2 (camk2n2).